The primary structure comprises 293 residues: Protein BOBBER 2 (293 aa).

At alanine 2 the chain carries N-acetylalanine. Positions 50–80 (EKEIVAAVMAAKQRLREAEKKKLEKESVKSM) form a coiled coil. Composition is skewed to basic and acidic residues over residues 67–102 (AEKK…KEES) and 110–120 (EIEKPKEEKES). The interval 67–125 (AEKKKLEKESVKSMEVEKPKKDSLKPTELEKPKEESLMATDPMEIEKPKEEKESGPIVP) is disordered. The 90-residue stretch at 131-220 (LDFEKYSWGQ…DQMEWWKYCV (90 aa)) folds into the CS domain.

It is found in the cytoplasm. Its subcellular location is the cytoplasmic granule. Functionally, small heat shock protein required for the establishment of auxin gradients and for patterning of the apical domain of the embryo. Involved in the specification of the cotyledon primordia. Also required for normal inflorescence and floral meristem function, normal developmental patterning and thermotolerance. Acts as a molecular chaperone. The protein is Protein BOBBER 2 (BOB2) of Arabidopsis thaliana (Mouse-ear cress).